Reading from the N-terminus, the 114-residue chain is Protein S100-A9 (114 aa).

A Blocked amino end (Thr) modification is found at Thr2. Cys3 is subject to S-nitrosocysteine; transient. 2 consecutive EF-hand domains span residues Ile12 to Asn47 and Lys54 to Ala89. His20 is a Zn(2+) binding site. Positions 23, 26, and 28 each coordinate Ca(2+). Asp30 is a binding site for Zn(2+). Ca(2+)-binding residues include Thr31, Glu36, Asp67, Asn69, Asp71, Gln73, and Glu78. 2 residues coordinate Zn(2+): His91 and His95. The span at Lys93–Gly102 shows a compositional bias: basic and acidic residues. Positions Lys93–Pro114 are disordered. The residue at position 105 (His105) is a Pros-methylhistidine. Thr113 bears the Phosphothreonine; by MAPK14 mark.

Homodimer. Preferentially exists as a heterodimer or heterotetramer with S100A8 known as calprotectin (S100A8/A9). S100A9 interacts with ATP2A2. S100A9 interacts with AGER, and with the heterodimeric complex formed by TLR4 and LY96 in the presence of calcium and/or zinc ions. S100A9 binds quinoline-3-carboxamides in the presence of calcium and/or zinc ions. S100A9 interacts with amyloid-beta protein 40. Calprotectin (S100A8/9) interacts with CEACAM3 and tubulin filaments in a calcium-dependent manner. Heterotetrameric calprotectin (S100A8/A9) interacts with ANXA6 and associates with tubulin filaments in activated monocytes. Calprotectin (S100A8/9) interacts with NCF2/P67PHOX, RAC1, RAC2, CYBA and CYBB. Calprotectin (S100A8/9) interacts with NOS2 to form the iNOS-S100A8/A9 transnitrosylase complex; induced by LDL(ox). Calprotectin (S100A8/9) interacts with CD69. Phosphorylated. Phosphorylation inhibits activation of tubulin polymerization. Post-translationally, S-nitrosylation of Cys-3 is implicated in LDL(ox)-induced S-nitrosylation of GAPDH at 'Cys-247' through a transnitrosylase mechanism involving a iNOS-S100A8/9 complex. In terms of processing, methylation at His-105 by METTL9 reduces zinc-binding without affecting heterodimerization with S100A8. Calprotectin (S100A8/9) is predominantly expressed in myeloid cells. Except for inflammatory conditions, the expression is restricted to a specific stage of myeloid differentiation since both proteins are expressed in circulating neutrophils and monocytes but are absent in normal tissue macrophages and lymphocytes. Under chronic inflammatory conditions, such as psoriasis and malignant disorders, also expressed in the epidermis. Found in high concentrations at local sites of inflammation or in the serum of patients with inflammatory diseases such as rheumatoid, cystic fibrosis, inflammatory bowel disease, Crohn's disease, giant cell arteritis, cystic fibrosis, Sjogren's syndrome, systemic lupus erythematosus, and progressive systemic sclerosis. Involved in the formation and deposition of amyloids in the aging prostate known as corpora amylacea inclusions. Strongly up-regulated in many tumors, including gastric, esophageal, colon, pancreatic, bladder, ovarian, thyroid, breast and skin cancers.

Its subcellular location is the secreted. The protein localises to the cytoplasm. The protein resides in the cytoskeleton. It localises to the cell membrane. In terms of biological role, S100A9 is a calcium- and zinc-binding protein which plays a prominent role in the regulation of inflammatory processes and immune response. It can induce neutrophil chemotaxis, adhesion, can increase the bactericidal activity of neutrophils by promoting phagocytosis via activation of SYK, PI3K/AKT, and ERK1/2 and can induce degranulation of neutrophils by a MAPK-dependent mechanism. Predominantly found as calprotectin (S100A8/A9) which has a wide plethora of intra- and extracellular functions. The intracellular functions include: facilitating leukocyte arachidonic acid trafficking and metabolism, modulation of the tubulin-dependent cytoskeleton during migration of phagocytes and activation of the neutrophilic NADPH-oxidase. Also participates in regulatory T-cell differentiation together with CD69. Activates NADPH-oxidase by facilitating the enzyme complex assembly at the cell membrane, transferring arachidonic acid, an essential cofactor, to the enzyme complex and S100A8 contributes to the enzyme assembly by directly binding to NCF2/P67PHOX. The extracellular functions involve pro-inflammatory, antimicrobial, oxidant-scavenging and apoptosis-inducing activities. Its pro-inflammatory activity includes recruitment of leukocytes, promotion of cytokine and chemokine production, and regulation of leukocyte adhesion and migration. Acts as an alarmin or a danger associated molecular pattern (DAMP) molecule and stimulates innate immune cells via binding to pattern recognition receptors such as Toll-like receptor 4 (TLR4) and receptor for advanced glycation endproducts (AGER). Binding to TLR4 and AGER activates the MAP-kinase and NF-kappa-B signaling pathways resulting in the amplification of the pro-inflammatory cascade. Has antimicrobial activity towards bacteria and fungi and exerts its antimicrobial activity probably via chelation of Zn(2+) which is essential for microbial growth. Can induce cell death via autophagy and apoptosis and this occurs through the cross-talk of mitochondria and lysosomes via reactive oxygen species (ROS) and the process involves BNIP3. Can regulate neutrophil number and apoptosis by an anti-apoptotic effect; regulates cell survival via ITGAM/ITGB and TLR4 and a signaling mechanism involving MEK-ERK. Its role as an oxidant scavenger has a protective role in preventing exaggerated tissue damage by scavenging oxidants. Can act as a potent amplifier of inflammation in autoimmunity as well as in cancer development and tumor spread. Has transnitrosylase activity; in oxidatively-modified low-densitity lipoprotein (LDL(ox))-induced S-nitrosylation of GAPDH on 'Cys-247' proposed to transfer the NO moiety from NOS2/iNOS to GAPDH via its own S-nitrosylated Cys-3. The iNOS-S100A8/A9 transnitrosylase complex is proposed to also direct selective inflammatory stimulus-dependent S-nitrosylation of multiple targets such as ANXA5, EZR, MSN and VIM by recognizing a [IL]-x-C-x-x-[DE] motif. The sequence is that of Protein S100-A9 from Homo sapiens (Human).